The following is a 256-amino-acid chain: Surfeit locus protein 2 (256 aa).

The tract at residues 133 to 256 is disordered; the sequence is RRREDQMDGD…KSFSSCKQPG (124 aa). The segment covering 135-150 has biased composition (basic and acidic residues); that stretch reads REDQMDGDGPRPREAF. The span at 156 to 165 shows a compositional bias: low complexity; it reads SDEGGAASDD. A compositionally biased stretch (acidic residues) spans 183–193; that stretch reads STEDGDGTDDF. A phosphothreonine mark is found at T190 and T195. Residues 194–218 show a composition bias toward basic and acidic residues; sequence LTDKEDEKAKPPREKATDEGRRETT. The span at 224 to 247 shows a compositional bias: basic residues; that stretch reads VQKRGKKQLGSLKKKFKSHHRKPK.

It belongs to the SURF2 family.

The polypeptide is Surfeit locus protein 2 (SURF2) (Homo sapiens (Human)).